We begin with the raw amino-acid sequence, 339 residues long: MRVYYDRDADLNLIKGKKVVIVGYGSQGHAHALNLKDSGVKDVAIALRKGSATAKKAEAAGFKVMEVAEAAKWADVMMMLTPDELQGEIYREHLHDNMKQGAALLFAHGLNVHFNLIEPRADLDVLMVAPKGPGHTVRSEYQRGGGVPSLIAIHKDSSGNAHDLGLSYASAIGGGRAGIIETSFKEECETDLFGEQVVLCGGLVELIKAGFETLVEAGYAPEMAYFECLHEVKLIVDLIYEGGIANMNYSISNTAEYGEYVTGPRIVTAETKAEMKRVLADIQNGIFTRNWMLENKVNQTSFKATRAKLAQHPIEEVGAKLREMMPWIKKGALVDKTKN.

Residues 1–182 (MRVYYDRDAD…GGGRAGIIET (182 aa)) form the KARI N-terminal Rossmann domain. NADP(+) is bound by residues 24 to 27 (YGSQ), Arg-48, Ser-51, Thr-53, and 83 to 86 (DELQ). His-108 is an active-site residue. Gly-134 lines the NADP(+) pocket. Residues 183–328 (SFKEECETDL…AKLREMMPWI (146 aa)) enclose the KARI C-terminal knotted domain. Asp-191, Glu-195, Glu-227, and Glu-231 together coordinate Mg(2+). Ser-252 lines the substrate pocket.

The protein belongs to the ketol-acid reductoisomerase family. Requires Mg(2+) as cofactor.

It catalyses the reaction (2R)-2,3-dihydroxy-3-methylbutanoate + NADP(+) = (2S)-2-acetolactate + NADPH + H(+). The catalysed reaction is (2R,3R)-2,3-dihydroxy-3-methylpentanoate + NADP(+) = (S)-2-ethyl-2-hydroxy-3-oxobutanoate + NADPH + H(+). Its pathway is amino-acid biosynthesis; L-isoleucine biosynthesis; L-isoleucine from 2-oxobutanoate: step 2/4. It participates in amino-acid biosynthesis; L-valine biosynthesis; L-valine from pyruvate: step 2/4. Its function is as follows. Involved in the biosynthesis of branched-chain amino acids (BCAA). Catalyzes an alkyl-migration followed by a ketol-acid reduction of (S)-2-acetolactate (S2AL) to yield (R)-2,3-dihydroxy-isovalerate. In the isomerase reaction, S2AL is rearranged via a Mg-dependent methyl migration to produce 3-hydroxy-3-methyl-2-ketobutyrate (HMKB). In the reductase reaction, this 2-ketoacid undergoes a metal-dependent reduction by NADPH to yield (R)-2,3-dihydroxy-isovalerate. The protein is Ketol-acid reductoisomerase (NADP(+)) of Rhodopseudomonas palustris (strain BisB5).